The following is a 423-amino-acid chain: Adenylosuccinate synthetase (423 aa).

GTP-binding positions include Gly11 to Lys17 and Gly39 to Thr41. The Proton acceptor role is filled by Asp12. Residues Asp12 and Gly39 each contribute to the Mg(2+) site. Residues Asp12–Lys15, Asn37–His40, Thr129, Arg143, Asn219, Thr234, and Arg298 contribute to the IMP site. The active-site Proton donor is the His40. Val294–Arg300 contacts substrate. GTP contacts are provided by residues Arg300, Lys326–Asp328, and Gly411–Gly413.

It belongs to the adenylosuccinate synthetase family. As to quaternary structure, homodimer. It depends on Mg(2+) as a cofactor.

It is found in the cytoplasm. The enzyme catalyses IMP + L-aspartate + GTP = N(6)-(1,2-dicarboxyethyl)-AMP + GDP + phosphate + 2 H(+). It functions in the pathway purine metabolism; AMP biosynthesis via de novo pathway; AMP from IMP: step 1/2. Its function is as follows. Plays an important role in the de novo pathway and in the salvage pathway of purine nucleotide biosynthesis. Catalyzes the first committed step in the biosynthesis of AMP from IMP. The polypeptide is Adenylosuccinate synthetase (Penicillium rubens (strain ATCC 28089 / DSM 1075 / NRRL 1951 / Wisconsin 54-1255) (Penicillium chrysogenum)).